Consider the following 530-residue polypeptide: Phosphoenolpyruvate carboxykinase (ATP) (530 aa).

Substrate is bound by residues arginine 58, tyrosine 195, and lysine 201. ATP is bound by residues lysine 201, histidine 220, and 236-244; that span reads GLSGTGKTT. Lysine 201 and histidine 220 together coordinate Mn(2+). Aspartate 257 contacts Mn(2+). Residues glutamate 285, arginine 321, 440 to 441, and threonine 446 contribute to the ATP site; that span reads RI. Arginine 321 lines the substrate pocket.

This sequence belongs to the phosphoenolpyruvate carboxykinase (ATP) family. It depends on Mn(2+) as a cofactor.

The protein resides in the cytoplasm. It catalyses the reaction oxaloacetate + ATP = phosphoenolpyruvate + ADP + CO2. It functions in the pathway carbohydrate biosynthesis; gluconeogenesis. In terms of biological role, involved in the gluconeogenesis. Catalyzes the conversion of oxaloacetate (OAA) to phosphoenolpyruvate (PEP) through direct phosphoryl transfer between the nucleoside triphosphate and OAA. The protein is Phosphoenolpyruvate carboxykinase (ATP) of Staphylococcus epidermidis (strain ATCC 35984 / DSM 28319 / BCRC 17069 / CCUG 31568 / BM 3577 / RP62A).